A 258-amino-acid polypeptide reads, in one-letter code: Imidazole glycerol phosphate synthase subunit HisF (258 aa).

Active-site residues include Asp-11 and Asp-130.

The protein belongs to the HisA/HisF family. In terms of assembly, heterodimer of HisH and HisF.

It is found in the cytoplasm. The catalysed reaction is 5-[(5-phospho-1-deoxy-D-ribulos-1-ylimino)methylamino]-1-(5-phospho-beta-D-ribosyl)imidazole-4-carboxamide + L-glutamine = D-erythro-1-(imidazol-4-yl)glycerol 3-phosphate + 5-amino-1-(5-phospho-beta-D-ribosyl)imidazole-4-carboxamide + L-glutamate + H(+). It participates in amino-acid biosynthesis; L-histidine biosynthesis; L-histidine from 5-phospho-alpha-D-ribose 1-diphosphate: step 5/9. Its function is as follows. IGPS catalyzes the conversion of PRFAR and glutamine to IGP, AICAR and glutamate. The HisF subunit catalyzes the cyclization activity that produces IGP and AICAR from PRFAR using the ammonia provided by the HisH subunit. This Lachnoclostridium phytofermentans (strain ATCC 700394 / DSM 18823 / ISDg) (Clostridium phytofermentans) protein is Imidazole glycerol phosphate synthase subunit HisF.